A 127-amino-acid polypeptide reads, in one-letter code: ATP synthase epsilon chain (127 aa).

It belongs to the ATPase epsilon chain family. F-type ATPases have 2 components, CF(1) - the catalytic core - and CF(0) - the membrane proton channel. CF(1) has five subunits: alpha(3), beta(3), gamma(1), delta(1), epsilon(1). CF(0) has three main subunits: a, b and c.

It localises to the cell inner membrane. Functionally, produces ATP from ADP in the presence of a proton gradient across the membrane. The protein is ATP synthase epsilon chain of Leptospira interrogans serogroup Icterohaemorrhagiae serovar copenhageni (strain Fiocruz L1-130).